Consider the following 154-residue polypeptide: Interleukin-2 (154 aa).

The signal sequence occupies residues 1–20 (MYRMQLLSCIALSLALVTNS). O-linked (GalNAc...) threonine glycosylation is present at threonine 23. A disulfide bridge connects residues cysteine 78 and cysteine 126.

It belongs to the IL-2 family.

Its subcellular location is the secreted. Cytokine produced by activated CD4-positive helper T-cells and to a lesser extend activated CD8-positive T-cells and natural killer (NK) cells that plays pivotal roles in the immune response and tolerance. Binds to a receptor complex composed of either the high-affinity trimeric IL-2R (IL2RA/CD25, IL2RB/CD122 and IL2RG/CD132) or the low-affinity dimeric IL-2R (IL2RB and IL2RG). Interaction with the receptor leads to oligomerization and conformation changes in the IL-2R subunits resulting in downstream signaling starting with phosphorylation of JAK1 and JAK3. In turn, JAK1 and JAK3 phosphorylate the receptor to form a docking site leading to the phosphorylation of several substrates including STAT5. This process leads to activation of several pathways including STAT, phosphoinositide-3-kinase/PI3K and mitogen-activated protein kinase/MAPK pathways. Functions as a T-cell growth factor and can increase NK-cell cytolytic activity as well. Promotes strong proliferation of activated B-cells and subsequently immunoglobulin production. Plays a pivotal role in regulating the adaptive immune system by controlling the survival and proliferation of regulatory T-cells, which are required for the maintenance of immune tolerance. Moreover, participates in the differentiation and homeostasis of effector T-cell subsets, including Th1, Th2, Th17 as well as memory CD8-positive T-cells. The polypeptide is Interleukin-2 (IL2) (Macaca fascicularis (Crab-eating macaque)).